Here is a 473-residue protein sequence, read N- to C-terminus: Trehalose-6-phosphate synthase (473 aa).

Residue arginine 10 coordinates D-glucose 6-phosphate. UDP-alpha-D-glucose is bound at residue 21-22; that stretch reads GG. D-glucose 6-phosphate-binding residues include tyrosine 76 and aspartate 130. UDP-alpha-D-glucose is bound by residues arginine 262 and lysine 267. Arginine 300 lines the D-glucose 6-phosphate pocket. UDP-alpha-D-glucose contacts are provided by residues phenylalanine 339 and 365–369; that span reads LVAKE.

The protein belongs to the glycosyltransferase 20 family. As to quaternary structure, homotetramer.

It catalyses the reaction D-glucose 6-phosphate + UDP-alpha-D-glucose = alpha,alpha-trehalose 6-phosphate + UDP + H(+). The protein operates within glycan biosynthesis; trehalose biosynthesis. In terms of biological role, probably involved in the osmoprotection via the biosynthesis of trehalose. Catalyzes the transfer of glucose from UDP-alpha-D-glucose (UDP-Glc) to D-glucose 6-phosphate (Glc-6-P) to form trehalose-6-phosphate. Acts with retention of the anomeric configuration of the UDP-sugar donor. The chain is Trehalose-6-phosphate synthase from Citrobacter koseri (strain ATCC BAA-895 / CDC 4225-83 / SGSC4696).